The sequence spans 52 residues: Rubredoxin (52 aa).

Position 1 is an N-formylmethionine; partial (methionine 1). Residues 1 to 52 enclose the Rubredoxin-like domain; sequence MKKYGCLVCGYVYDPAKGDPDHGIAPGTAFEDLPADWVCPLCGVSKDEFEPL. Fe cation contacts are provided by cysteine 6, cysteine 9, cysteine 39, and cysteine 42.

Belongs to the rubredoxin family. Fe(3+) is required as a cofactor. Post-translationally, observed in four forms, with and without iron, and with and without formylation at Met-1.

Functionally, rubredoxin is a small nonheme, iron protein lacking acid-labile sulfide. Its single Fe, chelated to 4 Cys, functions as an electron acceptor and may also stabilize the conformation of the molecule. The protein is Rubredoxin of Heliobacterium mobile (Heliobacillus mobilis).